The chain runs to 696 residues: MSSSLLAGGHMVSLTPCEESRMALHPTPSPGLPALCPYYTTESWGTQPLMAPTLRKGSSDRLQQAQQAEARAHCLLQGPGEQASGASQDLESCIDFSLEALNQMILEIDPTFQLLPSGTAGPQAESTNSIMSRNKKEEPEALDIKYIEVTSTRSRYLDGPQRCSSPCATPPFGSPRSGSLFLSRDIPRETRSSSNESLIFSGNQGRGPSPLTPSSLSNAIPCRESRTSGSPLATPPGWEKGLRAPQRGSRVSILSASPVSDVSYVFGSNQSLPHSSLSSYPSSSRSLGSPASSSSSLHSLDRGSQCGRPSDAQAPSNPILGMGQPQAVQSTPVAKEQASSCPASVTNSMADIPIVLINGSPEPQSPPAQRTPGHQDSVQSRVTSPSHLCQAIKSPSKTLPDVPLPASPDGPAKDMQPTMKFVMDTSKYWFKPSITREQAINLLRTEKPGAFVIRDSSSYRGSFGLALKVQETSASAPNRPGEDSSDLIRHFLIESSAKGVHLKGADEEPYFGSLSSFVCQHSIMALALPCKLTIPQKELGGAEPASDSPTHGQTSCLKISAGCHTLYLSSVSVETLSGALAVQKAISVTLERDVLPTPTVVHFKVTEQGITLTDVQRKVFFRRHYPLSALRFCGMDPEQRKWQKYCKPSRIFGFVAKSQTEPQENVCHLFAEYDAVQPASQVISLVTALLQDTERM.

Positions methionine 1–leucine 14 are cleaved as a signal peptide. Disordered stretches follow at residues leucine 157–glutamine 246, serine 271–serine 344, and leucine 356–glutamine 416. Polar residues predominate over residues serine 192 to asparagine 203. Position 230 is a phosphoserine (serine 230). A compositionally biased stretch (low complexity) spans serine 271 to serine 304. 2 stretches are compositionally biased toward polar residues: residues glutamine 326–serine 344 and proline 372–lysine 397. The region spanning tryptophan 429 to glutamine 536 is the SH2 domain. Residues cysteine 563–leucine 690 form the PTB domain.

The protein belongs to the PTEN phosphatase protein family. Interacts (via SH2 domain) with Rho GTPase-activating protein DLC1 (via C-terminus); the interaction is independent of DLC1 tyrosine phosphorylation. Interacts with integrin ITGB1; the interaction displaces tensin TNS3 from the ITGB1 cytoplasmic tail and promotes ITGB1 stability. Interacts (via SH2 domain) with E3 ubiquitin-protein ligase CBL (phosphorylated on 'Tyr-780'); the interaction is enhanced in the presence of EGF and reduces interaction of CBL with EGFR. Interacts (via SH2 domain) with receptor tyrosine kinase MET (when phosphorylated); the interaction increases MET protein stability.

Its subcellular location is the cell junction. It localises to the focal adhesion. The protein resides in the cytoplasm. It is found in the cytoskeleton. Functionally, promotes EGF-induced cell migration by displacing tensin TNS3 from the cytoplasmic tail of integrin ITGB1 which results in dissociation of TNS3 from focal adhesions, disassembly of actin stress fibers and initiation of cell migration. Suppresses ligand-induced degradation of EGFR by reducing EGFR ubiquitination in the presence of EGF. Increases MET protein stability by inhibiting MET endocytosis and subsequent lysosomal degradation which leads to increased cell survival, proliferation and migration. This Mus musculus (Mouse) protein is Tensin-4 (Tns4).